Reading from the N-terminus, the 606-residue chain is Phosphomethylpyrimidine synthase (606 aa).

Residues 84-103 (EPYPARSVKPEDNGLTSSPI) form a disordered region. Substrate-binding positions include N209, M238, Y267, H303, 323–325 (SRG), 364–367 (DGLR), and E403. H407 contributes to the Zn(2+) binding site. Y430 is a substrate binding site. Residue H471 coordinates Zn(2+). [4Fe-4S] cluster contacts are provided by C551, C554, and C559.

This sequence belongs to the ThiC family. As to quaternary structure, homodimer. [4Fe-4S] cluster is required as a cofactor.

It catalyses the reaction 5-amino-1-(5-phospho-beta-D-ribosyl)imidazole + S-adenosyl-L-methionine = 4-amino-2-methyl-5-(phosphooxymethyl)pyrimidine + CO + 5'-deoxyadenosine + formate + L-methionine + 3 H(+). It functions in the pathway cofactor biosynthesis; thiamine diphosphate biosynthesis. Its function is as follows. Catalyzes the synthesis of the hydroxymethylpyrimidine phosphate (HMP-P) moiety of thiamine from aminoimidazole ribotide (AIR) in a radical S-adenosyl-L-methionine (SAM)-dependent reaction. This Bartonella tribocorum (strain CIP 105476 / IBS 506) protein is Phosphomethylpyrimidine synthase.